A 361-amino-acid chain; its full sequence is Putative F-box protein At3g25460 (361 aa).

Residues 1-45 form the F-box domain; the sequence is MMMPELPEDLLVEILCRVPATSLKRLRSTCKLWNHLYNDKRFKSK.

This Arabidopsis thaliana (Mouse-ear cress) protein is Putative F-box protein At3g25460.